The sequence spans 565 residues: NAD-dependent malic enzyme (565 aa).

Tyrosine 104 functions as the Proton donor in the catalytic mechanism. Arginine 157 contacts NAD(+). Lysine 175 serves as the catalytic Proton acceptor. Glutamate 246, aspartate 247, and aspartate 270 together coordinate a divalent metal cation. Aspartate 270 and asparagine 418 together coordinate NAD(+).

It belongs to the malic enzymes family. Homotetramer. It depends on Mg(2+) as a cofactor. The cofactor is Mn(2+).

It carries out the reaction (S)-malate + NAD(+) = pyruvate + CO2 + NADH. It catalyses the reaction oxaloacetate + H(+) = pyruvate + CO2. The polypeptide is NAD-dependent malic enzyme (Shigella flexneri serotype 5b (strain 8401)).